A 153-amino-acid chain; its full sequence is Large ribosomal subunit protein uL13 (153 aa).

Positions 134–153 (EAQQPQALDVGSLNRKNVSA) are disordered.

It belongs to the universal ribosomal protein uL13 family. Part of the 50S ribosomal subunit.

In terms of biological role, this protein is one of the early assembly proteins of the 50S ribosomal subunit, although it is not seen to bind rRNA by itself. It is important during the early stages of 50S assembly. This is Large ribosomal subunit protein uL13 from Methylorubrum extorquens (strain CM4 / NCIMB 13688) (Methylobacterium extorquens).